We begin with the raw amino-acid sequence, 876 residues long: Valine--tRNA ligase (876 aa).

The 'HIGH' region motif lies at 44-54; that stretch reads PNVTGKLHLGH. Residues 520 to 524 carry the 'KMSKS' region motif; that stretch reads KMSKS. Lys-523 provides a ligand contact to ATP. A coiled-coil region spans residues 806-876; the sequence is EGLIDMDKEI…VKLRINQLKA (71 aa).

The protein belongs to the class-I aminoacyl-tRNA synthetase family. ValS type 1 subfamily. As to quaternary structure, monomer.

It is found in the cytoplasm. The catalysed reaction is tRNA(Val) + L-valine + ATP = L-valyl-tRNA(Val) + AMP + diphosphate. Functionally, catalyzes the attachment of valine to tRNA(Val). As ValRS can inadvertently accommodate and process structurally similar amino acids such as threonine, to avoid such errors, it has a 'posttransfer' editing activity that hydrolyzes mischarged Thr-tRNA(Val) in a tRNA-dependent manner. This Staphylococcus saprophyticus subsp. saprophyticus (strain ATCC 15305 / DSM 20229 / NCIMB 8711 / NCTC 7292 / S-41) protein is Valine--tRNA ligase.